The sequence spans 127 residues: Large ribosomal subunit protein eL8 (127 aa).

This sequence belongs to the eukaryotic ribosomal protein eL8 family. As to quaternary structure, part of the 50S ribosomal subunit. Probably part of the RNase P complex.

The protein localises to the cytoplasm. Multifunctional RNA-binding protein that recognizes the K-turn motif in ribosomal RNA, the RNA component of RNase P, box H/ACA, box C/D and box C'/D' sRNAs. This is Large ribosomal subunit protein eL8 from Picrophilus torridus (strain ATCC 700027 / DSM 9790 / JCM 10055 / NBRC 100828 / KAW 2/3).